The chain runs to 526 residues: PTS system alpha-glucoside-specific EIICB component (526 aa).

In terms of domain architecture, PTS EIIC type-1 spans 1–417 (MLKHFQRLGG…YNVKTSGRED (417 aa)). A run of 12 helical transmembrane segments spans residues 12–32 (LFAPVLLFPFAGLVVALTIIL), 59–79 (GWTVFRQLPLIFAIGLPIGLA), 88–108 (LAVLATYLTYNYFISAILTFW), 132–152 (IKTLDTSIVGAIVISGITIYI), 173–193 (LVSAIAFVVMIPCAYITCLVW), 200–220 (ISSLQALMVTSGTFGVWLYTF), 224–244 (ILIPTGLHHFIYGPFIFGPAV), 274–294 (GGFALHGNSKIFGCIGIALAM), 305–325 (IVSGLLIPAALTAALVGITEP), 330–350 (FLFIAPFLFVVHAVLAATMAA), 355–375 (FGVVKYGSGIIEIAALNWLPL), and 381–401 (GVMFTQLAIGVVFIGIHYLVF). Residues 447–526 (SGKAKAFLEA…ESFENLMEQN (80 aa)) enclose the PTS EIIB type-1 domain. The Phosphocysteine intermediate; for EIIB activity role is filled by Cys469.

Its subcellular location is the cell membrane. Functionally, the phosphoenolpyruvate-dependent sugar phosphotransferase system (sugar PTS), a major carbohydrate active -transport system, catalyzes the phosphorylation of incoming sugar substrates concomitantly with their translocation across the cell membrane. This system is involved in alpha-glucoside transport. The polypeptide is PTS system alpha-glucoside-specific EIICB component (malB) (Fusobacterium mortiferum).